Consider the following 371-residue polypeptide: Queuine tRNA-ribosyltransferase (371 aa).

The active-site Proton acceptor is Asp-90. Substrate contacts are provided by residues 90–94, Asp-144, Gln-188, and Gly-215; that span reads DSGGF. Residues 246–252 form an RNA binding region; the sequence is GVGTPED. Asp-265 (nucleophile) is an active-site residue. Residues 270 to 274 are RNA binding; important for wobble base 34 recognition; it reads TRNAR. 4 residues coordinate Zn(2+): Cys-303, Cys-305, Cys-308, and His-334.

Belongs to the queuine tRNA-ribosyltransferase family. In terms of assembly, homodimer. Within each dimer, one monomer is responsible for RNA recognition and catalysis, while the other monomer binds to the replacement base PreQ1. The cofactor is Zn(2+).

The enzyme catalyses 7-aminomethyl-7-carbaguanine + guanosine(34) in tRNA = 7-aminomethyl-7-carbaguanosine(34) in tRNA + guanine. The protein operates within tRNA modification; tRNA-queuosine biosynthesis. In terms of biological role, catalyzes the base-exchange of a guanine (G) residue with the queuine precursor 7-aminomethyl-7-deazaguanine (PreQ1) at position 34 (anticodon wobble position) in tRNAs with GU(N) anticodons (tRNA-Asp, -Asn, -His and -Tyr). Catalysis occurs through a double-displacement mechanism. The nucleophile active site attacks the C1' of nucleotide 34 to detach the guanine base from the RNA, forming a covalent enzyme-RNA intermediate. The proton acceptor active site deprotonates the incoming PreQ1, allowing a nucleophilic attack on the C1' of the ribose to form the product. After dissociation, two additional enzymatic reactions on the tRNA convert PreQ1 to queuine (Q), resulting in the hypermodified nucleoside queuosine (7-(((4,5-cis-dihydroxy-2-cyclopenten-1-yl)amino)methyl)-7-deazaguanosine). The protein is Queuine tRNA-ribosyltransferase of Neisseria meningitidis serogroup C / serotype 2a (strain ATCC 700532 / DSM 15464 / FAM18).